A 633-amino-acid chain; its full sequence is DNA mismatch repair protein MutL (633 aa).

The protein belongs to the DNA mismatch repair MutL/HexB family.

This protein is involved in the repair of mismatches in DNA. It is required for dam-dependent methyl-directed DNA mismatch repair. May act as a 'molecular matchmaker', a protein that promotes the formation of a stable complex between two or more DNA-binding proteins in an ATP-dependent manner without itself being part of a final effector complex. In Pseudomonas fluorescens (strain SBW25), this protein is DNA mismatch repair protein MutL.